Consider the following 103-residue polypeptide: Small ribosomal subunit protein uS10 (103 aa).

This sequence belongs to the universal ribosomal protein uS10 family. Part of the 30S ribosomal subunit.

In terms of biological role, involved in the binding of tRNA to the ribosomes. In Acetivibrio thermocellus (strain ATCC 27405 / DSM 1237 / JCM 9322 / NBRC 103400 / NCIMB 10682 / NRRL B-4536 / VPI 7372) (Clostridium thermocellum), this protein is Small ribosomal subunit protein uS10.